The sequence spans 372 residues: Queuine tRNA-ribosyltransferase (372 aa).

Asp-92 (proton acceptor) is an active-site residue. Substrate contacts are provided by residues 92-96, Asp-146, Gln-188, and Gly-215; that span reads DSGGF. The tract at residues 246–252 is RNA binding; the sequence is GIGTLRE. Asp-265 acts as the Nucleophile in catalysis. Residues 270-274 are RNA binding; important for wobble base 34 recognition; sequence TRLGR. Zn(2+)-binding residues include Cys-303, Cys-305, Cys-308, and His-334.

It belongs to the queuine tRNA-ribosyltransferase family. As to quaternary structure, homodimer. Within each dimer, one monomer is responsible for RNA recognition and catalysis, while the other monomer binds to the replacement base PreQ1. It depends on Zn(2+) as a cofactor.

The catalysed reaction is 7-aminomethyl-7-carbaguanine + guanosine(34) in tRNA = 7-aminomethyl-7-carbaguanosine(34) in tRNA + guanine. Its pathway is tRNA modification; tRNA-queuosine biosynthesis. Catalyzes the base-exchange of a guanine (G) residue with the queuine precursor 7-aminomethyl-7-deazaguanine (PreQ1) at position 34 (anticodon wobble position) in tRNAs with GU(N) anticodons (tRNA-Asp, -Asn, -His and -Tyr). Catalysis occurs through a double-displacement mechanism. The nucleophile active site attacks the C1' of nucleotide 34 to detach the guanine base from the RNA, forming a covalent enzyme-RNA intermediate. The proton acceptor active site deprotonates the incoming PreQ1, allowing a nucleophilic attack on the C1' of the ribose to form the product. After dissociation, two additional enzymatic reactions on the tRNA convert PreQ1 to queuine (Q), resulting in the hypermodified nucleoside queuosine (7-(((4,5-cis-dihydroxy-2-cyclopenten-1-yl)amino)methyl)-7-deazaguanosine). The protein is Queuine tRNA-ribosyltransferase of Synechococcus sp. (strain CC9311).